A 378-amino-acid chain; its full sequence is 3,6-diketocamphane 1,6-monooxygenase (378 aa).

Residues His10, Ser44, Met76, and 201-209 each bind FMN; that span reads TGFSYNSPS.

The protein belongs to the bacterial luciferase oxidoreductase family. As to quaternary structure, homodimer. Likely forms a loose transient complex with a P.putida flavin reductase that provides the required FMNH(2) to the enzyme.

It carries out the reaction (1S,4S)-bornane-2,5-dione + FMNH2 + O2 = (1S,4S)-5-oxo-1,2-campholide + FMN + H2O + H(+). Its function is as follows. Involved in the degradation and assimilation of (-)-camphor, which allows P.putida strain NCIMB 10007 to grow on this enantiomer of camphor as the sole carbon source. Catalyzes the FMNH(2)-dependent lactonization of 3,6-diketocamphane via a Baeyer-Villiger oxidation to produce the unstable lactone 5-oxo-1,2-campholide with (S,S) configuration, that presumably undergoes spontaneous hydrolysis to form 2-oxo-Delta(3)-4,5,5-trimethylcyclopentenylacetate. Is also able to convert (-)-camphor to the corresponding lactone in vitro. Shows no conversion of (+)-camphor, (+)-fenchone, (-)-fenchone, and (+)-nopinone. Acts on other bicyclic ketones but very poorly on a few 2- and 4-substituted monocyclic ketones. The chain is 3,6-diketocamphane 1,6-monooxygenase from Pseudomonas putida (Arthrobacter siderocapsulatus).